The chain runs to 677 residues: Probable sulfate transporter 4.2 (677 aa).

Topologically, residues 1-83 are cytoplasmic; it reads MSLAVKDLST…RTYRWHQYFK (83 aa). Residues 84–104 traverse the membrane as a helical segment; that stretch reads LDLMAGITVGIMLVPQAMSYA. At 105 to 108 the chain is on the extracellular side; sequence RLAG. Residues 109–129 form a helical membrane-spanning segment; that stretch reads LQPIYGLYSSFVPVFVYAVFG. Residues 130–133 are Cytoplasmic-facing; sequence SSRQ. A helical membrane pass occupies residues 134–154; the sequence is LAVGPVALVSLLVSNALSGIV. The Extracellular portion of the chain corresponds to 155 to 161; that stretch reads DPSEELY. The chain crosses the membrane as a helical span at residues 162 to 182; sequence TELAILLALMVGIFESIMGFL. Residues 183 to 189 lie on the Cytoplasmic side of the membrane; that stretch reads RLGWLIR. A helical membrane pass occupies residues 190 to 210; it reads FISHSVISGFTTASAVVIGLS. Residues 211–241 lie on the Extracellular side of the membrane; that stretch reads QLKYFLGYSVSRSSKIMPVIDSIIAGADQFK. A helical transmembrane segment spans residues 242–262; the sequence is WPPFLLGCTILVILLVMKHVG. The Cytoplasmic portion of the chain corresponds to 263-269; the sequence is KAKKELR. Residues 270 to 290 form a helical membrane-spanning segment; that stretch reads FIRAAGPLTGLALGTIIAKVF. The Extracellular segment spans residues 291–318; the sequence is HPPSITLVGDIPQGLPKFSFPKSFDHAK. The chain crosses the membrane as a helical span at residues 319 to 339; sequence LLLPTSALITGVAILESVGIA. Over 340–355 the chain is Cytoplasmic; it reads KALAAKNRYELDSNSE. The chain crosses the membrane as a helical span at residues 356–376; that stretch reads LFGLGVANIFGSLFSAYPTTG. At 377-392 the chain is on the extracellular side; it reads SFSRSAVNSESEAKTG. A helical transmembrane segment spans residues 393–413; sequence LSGLVTGIIIGCSLLFLTPMF. The Cytoplasmic segment spans residues 414–420; sequence KFIPQCA. Residues 421 to 441 form a helical membrane-spanning segment; sequence LAAIVISAVSGLVDYEGAIFL. Residues 442 to 459 are Extracellular-facing; sequence WRVDKRDFTLWTITSTTT. The helical transmembrane segment at 460–480 threads the bilayer; sequence LFFGIEIGVLIGVGFSLAFVI. The Cytoplasmic segment spans residues 481–677; it reads HESANPHIAV…LEEPLLSREK (197 aa). The region spanning 505–629 is the STAS domain; the sequence is QYPEAYTYNG…VRVHDAVQVC (125 aa).

The protein belongs to the SLC26A/SulP transporter (TC 2.A.53) family.

It is found in the membrane. Its function is as follows. H(+)/sulfate cotransporter that may play a role in the regulation of sulfate assimilation. This chain is Probable sulfate transporter 4.2 (SULTR4;2), found in Arabidopsis thaliana (Mouse-ear cress).